Consider the following 232-residue polypeptide: Ubiquinone biosynthesis O-methyltransferase (232 aa).

4 residues coordinate S-adenosyl-L-methionine: arginine 36, glycine 55, aspartate 76, and methionine 120.

Belongs to the methyltransferase superfamily. UbiG/COQ3 family.

It carries out the reaction a 3-demethylubiquinol + S-adenosyl-L-methionine = a ubiquinol + S-adenosyl-L-homocysteine + H(+). The catalysed reaction is a 3-(all-trans-polyprenyl)benzene-1,2-diol + S-adenosyl-L-methionine = a 2-methoxy-6-(all-trans-polyprenyl)phenol + S-adenosyl-L-homocysteine + H(+). The protein operates within cofactor biosynthesis; ubiquinone biosynthesis. In terms of biological role, O-methyltransferase that catalyzes the 2 O-methylation steps in the ubiquinone biosynthetic pathway. The protein is Ubiquinone biosynthesis O-methyltransferase of Paraburkholderia xenovorans (strain LB400).